The following is a 26-amino-acid chain: Mitochondrial import receptor subunit TOM7-2 (26 aa).

It belongs to the Tom7 family. Forms part of the preprotein translocase complex of the outer mitochondrial membrane (TOM complex).

The protein localises to the mitochondrion outer membrane. In terms of biological role, seems to act as a modulator of the dynamics of the mitochondrial protein transport machinery. Seems to promote the dissociation of subunits of the outer membrane translocase. The protein is Mitochondrial import receptor subunit TOM7-2 (TOM7-2) of Solanum tuberosum (Potato).